Consider the following 224-residue polypeptide: Vacuolar protein-sorting-associated protein 24 (224 aa).

Residue lysine 203 forms a Glycyl lysine isopeptide (Lys-Gly) (interchain with G-Cter in ubiquitin) linkage.

It belongs to the SNF7 family. In terms of assembly, core component of the ESCRT-III complex (endosomal sorting required for transport complex III). ESCRT-III appears to be sequentially assembled as a flat lattice on the endosome membrane and forms a transient 450 kDa complex that contains DID4, oligomerized SNF7, VPS20 and VPS24. SNF7 oligomerization into a membrane-associated filament is nucleated by association of SNF7 with VPS20; the process is terminated through association of VPS24, possibly by capping the SNF7 filament. VPS24 subsequently associates with DID4/VPS2. Interacts with the VPS4. Interacts with DID2.

It is found in the endosome membrane. It localises to the endomembrane system. In terms of biological role, class E VPS protein implicated in concentration and sorting of cargo proteins of the multivesicular body (MVB) for incorporation into intralumenal vesicles. The lumenal sequestrated membrane proteins will be targeted into the vacuole after fusion of the endosome with the vacuole. Acts a component of the ESCRT-III complex, which appears to be critical for late steps in MVB sorting, such as membrane invagination and final cargo sorting and recruitment oflate-acting components of the sorting machinery. The MVB pathway requires the sequential function of ESCRT-O, -I,-II and -III complex assemblies. The DID4/VPS2-VPS24 subcomplex is required for the VPS4-dependent dissociation of ESCRT-III. The sequence is that of Vacuolar protein-sorting-associated protein 24 (VPS24) from Saccharomyces cerevisiae (strain ATCC 204508 / S288c) (Baker's yeast).